The following is a 328-amino-acid chain: D-cysteine desulfhydrase (328 aa).

An N6-(pyridoxal phosphate)lysine modification is found at K51.

The protein belongs to the ACC deaminase/D-cysteine desulfhydrase family. In terms of assembly, homodimer. The cofactor is pyridoxal 5'-phosphate.

The enzyme catalyses D-cysteine + H2O = hydrogen sulfide + pyruvate + NH4(+) + H(+). In terms of biological role, catalyzes the alpha,beta-elimination reaction of D-cysteine and of several D-cysteine derivatives. It could be a defense mechanism against D-cysteine. This is D-cysteine desulfhydrase from Escherichia coli (strain UTI89 / UPEC).